The sequence spans 164 residues: MNIMRIPRLYVENAEKHEGRKVVIENGGKVIKFLDKDEEYEGDGKVLYQVIYDDFDNYVLMGTVTKDMIIEYEVGGVRQITYIKKGTKLLEIPAEGYKVYPIVDFGCRILGGHRIAALQSRKGDIRFVNTPVNGIVLFLKEVPAKRENYVFYILPEEEIKFEEE.

This is an uncharacterized protein from Methanocaldococcus jannaschii (strain ATCC 43067 / DSM 2661 / JAL-1 / JCM 10045 / NBRC 100440) (Methanococcus jannaschii).